Here is a 332-residue protein sequence, read N- to C-terminus: Glyoxylate reductase (332 aa).

NADP(+) contacts are provided by residues 155–158 and 236–238; these read MGRI and TSR. Residues arginine 238 and glutamate 267 contribute to the active site. Histidine 286 acts as the Proton donor in catalysis. 286 to 288 contacts NADP(+); it reads HAA.

Belongs to the D-isomer specific 2-hydroxyacid dehydrogenase family. GyaR subfamily. As to quaternary structure, homodimer.

Its subcellular location is the cytoplasm. The catalysed reaction is glycolate + NAD(+) = glyoxylate + NADH + H(+). The sequence is that of Glyoxylate reductase from Korarchaeum cryptofilum (strain OPF8).